We begin with the raw amino-acid sequence, 111 residues long: uncharacterized protein (111 aa).

The protein to M.tuberculosis Rv1271c.

This is an uncharacterized protein from Mycobacterium bovis (strain ATCC BAA-935 / AF2122/97).